Here is a 1487-residue protein sequence, read N- to C-terminus: Golgin subfamily A member 3 (1487 aa).

The residue at position 1 (Met-1) is an N-acetylmethionine. Residues 1 to 118 (MDGASAKQDG…GTSAEGSVRK (118 aa)) form a disordered region. A phosphoserine mark is found at Ser-18 and Ser-60. Residues 62–74 (DRSSQVAICQNGQ) show a composition bias toward polar residues. Residues 121 to 141 (LQSLRLSLPMQETQLCSTASS) form an interaction with GOPC region. Residues 172–257 (ERSSQPATKM…DYRTEDPSDS (86 aa)) are golgi-targeting domain. 2 disordered regions span residues 221-321 (PKVG…SSLS) and 365-394 (AAQH…SMES). Composition is skewed to low complexity over residues 269–288 (SSLK…SPSS), 312–321 (SDSSSHSSLS), and 365–375 (AAQHQDQNQEA). At Ser-270 the chain carries Phosphoserine. Residues 358-1454 (KDVLQAAAAQ…TITVHESLSS (1097 aa)) adopt a coiled-coil conformation. 3 positions are modified to phosphoserine: Ser-381, Ser-385, and Ser-461. The span at 785 to 796 (KEELDRGARRLE) shows a compositional bias: basic and acidic residues. The interval 785–804 (KEELDRGARRLEEDTEETSG) is disordered. Position 979 is a phosphoserine (Ser-979). Residues 1372-1382 (RGAAKKKEPKG) show a composition bias toward basic and acidic residues. Disordered regions lie at residues 1372 to 1396 (RGAA…IKIP) and 1458 to 1487 (VEAA…GLGQ). Ser-1387 carries the post-translational modification Phosphoserine. Basic and acidic residues predominate over residues 1462 to 1474 (PAEHAHPRGDTKL). Ser-1479 is modified (phosphoserine).

As to quaternary structure, homodimer. Interacts with GOLGA7. Interacts with GOPC. In terms of processing, cleaved by caspases in apoptotic cells. Highly expressed in testis. Transcripts can be found in spermatids during spermatogenesis. No expression in Leydig cells, spermatogonia or spermatocytes. Detected at low levels in all tissues.

The protein localises to the cytoplasm. It is found in the golgi apparatus. The protein resides in the golgi stack membrane. Functionally, plays an important role in spermatogenesis and/or testis development. Probably identical with the serologically detectable male antigen (SDM). Probably involved in maintaining Golgi structure. This Mus musculus (Mouse) protein is Golgin subfamily A member 3 (Golga3).